A 348-amino-acid polypeptide reads, in one-letter code: Zinc finger and SCAN domain-containing protein 16 (348 aa).

In terms of domain architecture, SCAN box spans 41–123 (RQHFRKLCYQ…TVLEDLEREL (83 aa)). 2 disordered regions span residues 160-184 (PKKT…TKNE) and 205-226 (RLNK…EGRS). Over residues 163–184 (TQLEQEAGKPQRNGDKTRTKNE) the composition is skewed to basic and acidic residues. C2H2-type zinc fingers lie at residues 236-258 (YKCD…RRTH), 264-286 (YKCD…HRVH), 292-314 (YKCK…QRIH), and 320-342 (YECD…QRIH).

This sequence belongs to the krueppel C2H2-type zinc-finger protein family.

It is found in the nucleus. May be involved in transcriptional regulation. The protein is Zinc finger and SCAN domain-containing protein 16 (ZSCAN16) of Homo sapiens (Human).